A 1091-amino-acid polypeptide reads, in one-letter code: Leucine--tRNA ligase, cytoplasmic (1091 aa).

A 'HIGH' region motif is present at residues 53 to 63 (PYMNGYLHIGH). The 'KMSKS' region motif lies at 715-719 (KMSKS). An ATP-binding site is contributed by K718.

The protein belongs to the class-I aminoacyl-tRNA synthetase family.

Its subcellular location is the cytoplasm. The protein localises to the cytosol. The catalysed reaction is tRNA(Leu) + L-leucine + ATP = L-leucyl-tRNA(Leu) + AMP + diphosphate. In terms of biological role, catalyzes the specific attachment of an amino acid to its cognate tRNA in a two step reaction: the amino acid (AA) is first activated by ATP to form AA-AMP and then transferred to the acceptor end of the tRNA. The sequence is that of Leucine--tRNA ligase, cytoplasmic from Arabidopsis thaliana (Mouse-ear cress).